The primary structure comprises 317 residues: Ribosomal protein L11 methyltransferase (317 aa).

The S-adenosyl-L-methionine site is built by threonine 158, glycine 179, aspartate 201, and asparagine 244.

The protein belongs to the methyltransferase superfamily. PrmA family.

The protein resides in the cytoplasm. It catalyses the reaction L-lysyl-[protein] + 3 S-adenosyl-L-methionine = N(6),N(6),N(6)-trimethyl-L-lysyl-[protein] + 3 S-adenosyl-L-homocysteine + 3 H(+). Methylates ribosomal protein L11. This chain is Ribosomal protein L11 methyltransferase, found in Streptococcus mutans serotype c (strain ATCC 700610 / UA159).